We begin with the raw amino-acid sequence, 159 residues long: 2-C-methyl-D-erythritol 2,4-cyclodiphosphate synthase (159 aa).

A divalent metal cation contacts are provided by Asp-8 and His-10. 4-CDP-2-C-methyl-D-erythritol 2-phosphate-binding positions include 8–10 and 34–35; these read DVH and HS. Residue His-42 participates in a divalent metal cation binding. Residues 56–58, 61–65, 100–106, 132–135, Phe-139, and Arg-142 contribute to the 4-CDP-2-C-methyl-D-erythritol 2-phosphate site; these read DIG, FPDTD, AQAPRML, and TTTE.

It belongs to the IspF family. In terms of assembly, homotrimer. It depends on a divalent metal cation as a cofactor.

The enzyme catalyses 4-CDP-2-C-methyl-D-erythritol 2-phosphate = 2-C-methyl-D-erythritol 2,4-cyclic diphosphate + CMP. The protein operates within isoprenoid biosynthesis; isopentenyl diphosphate biosynthesis via DXP pathway; isopentenyl diphosphate from 1-deoxy-D-xylulose 5-phosphate: step 4/6. Functionally, involved in the biosynthesis of isopentenyl diphosphate (IPP) and dimethylallyl diphosphate (DMAPP), two major building blocks of isoprenoid compounds. Catalyzes the conversion of 4-diphosphocytidyl-2-C-methyl-D-erythritol 2-phosphate (CDP-ME2P) to 2-C-methyl-D-erythritol 2,4-cyclodiphosphate (ME-CPP) with a corresponding release of cytidine 5-monophosphate (CMP). The sequence is that of 2-C-methyl-D-erythritol 2,4-cyclodiphosphate synthase from Escherichia coli O45:K1 (strain S88 / ExPEC).